The chain runs to 160 residues: Cytochrome b6-f complex subunit 4 (160 aa).

Transmembrane regions (helical) follow at residues 36–56 (LLYI…GLAV), 95–115 (LLGV…PFLE), and 131–151 (TVFL…TLPI).

It belongs to the cytochrome b family. PetD subfamily. In terms of assembly, the 4 large subunits of the cytochrome b6-f complex are cytochrome b6, subunit IV (17 kDa polypeptide, petD), cytochrome f and the Rieske protein, while the 4 small subunits are petG, petL, petM and petN. The complex functions as a dimer.

Its subcellular location is the plastid. The protein resides in the chloroplast thylakoid membrane. Component of the cytochrome b6-f complex, which mediates electron transfer between photosystem II (PSII) and photosystem I (PSI), cyclic electron flow around PSI, and state transitions. In Oryza nivara (Indian wild rice), this protein is Cytochrome b6-f complex subunit 4.